Here is a 185-residue protein sequence, read N- to C-terminus: MDNLWTSLPLPGLSDDQRHWLFAPGSLTLRLKALGRFSLEVTQQRIDFPEPGEAHALGCTTDSPAWIREVALKIDDQVMVCARSLTPMRERRPAWPELAGYGGEPLGSMLYNTPDIHRGAFECQRPQADDPLSRLATSLGQPSGKLLARRSRFLRDGQPLLIAECFVEGFWALLQERSAPLKLAI.

The substrate site is built by R68, L106, and E164.

This sequence belongs to the UbiC family.

It is found in the cytoplasm. The enzyme catalyses chorismate = 4-hydroxybenzoate + pyruvate. It functions in the pathway cofactor biosynthesis; ubiquinone biosynthesis. Its function is as follows. Removes the pyruvyl group from chorismate, with concomitant aromatization of the ring, to provide 4-hydroxybenzoate (4HB) for the ubiquinone pathway. In Pseudomonas entomophila (strain L48), this protein is Probable chorismate pyruvate-lyase 1.